Reading from the N-terminus, the 341-residue chain is Tubulin beta chain (341 aa).

Positions 64, 68, 69, 70, 130, and 152 each coordinate GTP.

The protein belongs to the tubulin family. As to quaternary structure, dimer of alpha and beta chains. A typical microtubule is a hollow water-filled tube with an outer diameter of 25 nm and an inner diameter of 15 nM. Alpha-beta heterodimers associate head-to-tail to form protofilaments running lengthwise along the microtubule wall with the beta-tubulin subunit facing the microtubule plus end conferring a structural polarity. Microtubules usually have 13 protofilaments but different protofilament numbers can be found in some organisms and specialized cells. Mg(2+) serves as cofactor.

The protein resides in the cytoplasm. The protein localises to the cytoskeleton. Functionally, tubulin is the major constituent of microtubules, a cylinder consisting of laterally associated linear protofilaments composed of alpha- and beta-tubulin heterodimers. Microtubules grow by the addition of GTP-tubulin dimers to the microtubule end, where a stabilizing cap forms. Below the cap, tubulin dimers are in GDP-bound state, owing to GTPase activity of alpha-tubulin. In Haliotis discus (Abalone), this protein is Tubulin beta chain.